Here is a 1710-residue protein sequence, read N- to C-terminus: MNGHSDEESVRNSSGESSQSDDDSGSASGSGSGSSSGSSSDGSSSQSGSSDSDSGSESGSQSESESDTSRENKVQAKPPKVDGAEFWKSSPSILAVQRSAILKKQQQQQQQQQHQASSNSGSEEDSSSSEDSDDSSSEVKRKKHKDEDWQMSGSGSPSQSGSDSESEEEREKSSCDETESDYEPKNKVKSRKPQNRSKSKNGKKILGQKKRQIDSSEEDDDEEDYDNDKRSSRRQATVNVSYKEDEEMKTDSDDLLEVCGEDVPQPEEEEFETIERFMDCRIGRKGATGATTTIYAVEADGDPNAGFEKNKEPGEIQYLIKWKGWSHIHNTWETEETLKQQNVRGMKKLDNYKKKDQETKRWLKNASPEDVEYYNCQQELTDDLHKQYQIVERIIAHSNQKSAAGYPDYYCKWQGLPYSECSWEDGALISKKFQACIDEYFSRNQSKTTPFKDCKVLKQRPRFVALKKQPSYIGGHEGLELRDYQLNGLNWLAHSWCKGNSCILADEMGLGKTIQTISFLNYLFHEHQLYGPFLLVVPLSTLTSWQREIQTWASQMNAVVYLGDINSRNMIRTHEWTHHQTKRLKFNILLTTYEILLKDKAFLGGLNWAFIGVDEAHRLKNDDSLLYKTLIDFKSNHRLLITGTPLQNSLKELWSLLHFIMPEKFSSWEDFEEEHGKGREYGYASLHKELEPFLLRRVKKDVEKSLPAKVEQILRMEMSALQKQYYKWILTRNYKALSKGSKGSTSGFLNIMMELKKCCNHCYLIKPPDNNEFYNKQEALQHLIRSSGKLILLDKLLIRLRERGNRVLIFSQMVRMLDILAEYLKYRQFPFQRLDGSIKGELRKQALDHFNAEGSEDFCFLLSTRAGGLGINLASADTVVIFDSDWNPQNDLQAQARAHRIGQKKQVNIYRLVTKGSVEEDILERAKKKMVLDHLVIQRMDTTGKTVLHTGSAPSSSTPFNKEELSAILKFGAEELFKEPEGEEQEPQEMDIDEILKRAETHENEPGPLTVGDELLSQFKVANFSNMDEDDIELEPERNSKNWEEIIPEDQRRRLEEEERQKELEEIYMLPRMRNCAKQISFNGSEGRRSRSRRYSGSDSDSISEGKRPKKRGRPRTIPRENIKGFSDAEIRRFIKSYKKFGGPLERLDAIARDAELVDKSETDLRRLGELVHNGCIKALKDSSSGTERTGGRLGKVKGPTFRISGVQVNAKLVISHEEELIPLHKSIPSDPEERKQYTIPCHTKAAHFDIDWGKEDDSNLLIGIYEYGYGSWEMIKMDPDLSLTHKILPDDPDKKPQAKQLQTRADYLIKLLSRDLAKKEALSGAGSSKRRKARAKKNKAMKSIKVKEEIKSDSSPLPSEKSDEDDDKLSESKSDGRERSKKSSVSDAPVHITASGEPVPISEESEELDQKTFSICKERMRPVKAALKQLDRPEKGLSEREQLEHTRQCLIKIGDHITECLKEYTNPEQIKQWRKNLWIFVSKFTEFDARKLHKLYKHAIKKRQESQQNSDQNSNLNPHVIRNPDVERLKENTNHDDSSRDSYSSDRHLTQYHDHHKDRHQGDSYKKSDSRKRPYSSFSNGKDHRDWDHYKQDSRYYSDREKHRKLDDHRSRDHRSNLEGSLKDRSHSDHRSHSDHRLHSDHRSSSEYTHHKSSRDYRYHSDWQMDHRASSSGPRSPLDQRSPYGSRSPFEHSVEHKSTPEHTWSSRKT.

Residues 1 to 10 (MNGHSDEESV) are compositionally biased toward basic and acidic residues. Positions 1–252 (MNGHSDEESV…KEDEEMKTDS (252 aa)) are disordered. Low complexity predominate over residues 35 to 63 (SSGSSSDGSSSQSGSSDSDSGSESGSQSE). Positions 67–85 (DTSRENKVQAKPPKVDGAE) are enriched in basic and acidic residues. Over residues 105 to 121 (QQQQQQQQQHQASSNSG) the composition is skewed to low complexity. Acidic residues predominate over residues 122–136 (SEEDSSSSEDSDDSS). Low complexity predominate over residues 152-163 (SGSGSPSQSGSD). Basic residues predominate over residues 187–210 (KVKSRKPQNRSKSKNGKKILGQKK). Phosphoserine is present on residues Ser-215 and Ser-216. A compositionally biased stretch (acidic residues) spans 215–226 (SSEEDDDEEDYD). The residue at position 237 (Thr-237) is a Phosphothreonine. Ser-241 is modified (phosphoserine). Position 250 is a phosphothreonine (Thr-250). Ser-252 carries the phosphoserine modification. Chromo domains are found at residues 272–364 (ETIE…RWLK) and 389–452 (QIVE…TPFK). Ser-471 is subject to Phosphoserine. Positions 493-663 (AHSWCKGNSC…WSLLHFIMPE (171 aa)) constitute a Helicase ATP-binding domain. Residue 506-513 (DEMGLGKT) coordinates ATP. Residues 614–617 (DEAH) carry the DEAH box motif. The Helicase C-terminal domain occupies 792-943 (LLDKLLIRLR…HLVIQRMDTT (152 aa)). Ser-1025, Ser-1040, Ser-1081, Ser-1085, Ser-1096, Ser-1098, Ser-1100, and Ser-1102 each carry phosphoserine. The tract at residues 1080–1120 (ISFNGSEGRRSRSRRYSGSDSDSISEGKRPKKRGRPRTIPR) is disordered. The segment covering 1108 to 1117 (RPKKRGRPRT) has biased composition (basic residues). Ser-1161 carries the phosphoserine modification. 2 disordered regions span residues 1321–1408 (EALS…ESEE) and 1502–1710 (KKRQ…SRKT). Positions 1329–1345 (SKRRKARAKKNKAMKSI) are enriched in basic residues. Phosphoserine occurs at positions 1353, 1355, 1356, 1360, 1363, 1371, and 1373. Residues 1370–1379 (LSESKSDGRE) are compositionally biased toward basic and acidic residues. The tract at residues 1409-1511 (LDQKTFSICK…KKRQESQQNS (103 aa)) is CHD1 helical C-terminal domain (CHCT). Over residues 1507–1516 (SQQNSDQNSN) the composition is skewed to low complexity. Basic and acidic residues-rich tracts occupy residues 1523-1573 (RNPD…DSRK) and 1582-1670 (GKDH…DHRA). Residue Ser-1622 is modified to Phosphoserine. 3 tandem repeats follow at residues 1628-1632 (HSDHR), 1634-1638 (HSDHR), and 1640-1644 (HSDHR). Residues 1628–1644 (HSDHRSHSDHRLHSDHR) form a 3 X 5 AA repeats of H-S-D-H-R region. Phosphoserine is present on residues Ser-1677, Arg-1688, and Ser-1689. The span at 1690-1701 (PFEHSVEHKSTP) shows a compositional bias: basic and acidic residues.

It belongs to the SNF2/RAD54 helicase family. In terms of assembly, component of the SAGA complex. Interacts with BCLAF1, NCoR, SRP20 and SAFB. Specifically interacts with methylated H3K4me2 and H3K4me3. Interacts with the FACT complex, the PAF complex and the U2 snRNP. Interacts directly with PAF1, SFA3A1, SFA3A2, SFA3A3, SNF2 and SSRP1. As to expression, expressed in many tissues including in the brain, where the highest level of expression is found in the cerebellum and basal ganglia.

It localises to the nucleus. The protein resides in the cytoplasm. The enzyme catalyses ATP + H2O = ADP + phosphate + H(+). In terms of biological role, ATP-dependent chromatin-remodeling factor which functions as substrate recognition component of the transcription regulatory histone acetylation (HAT) complex SAGA. Regulates polymerase II transcription. Also required for efficient transcription by RNA polymerase I, and more specifically the polymerase I transcription termination step. Regulates negatively DNA replication. Not only involved in transcription-related chromatin-remodeling, but also required to maintain a specific chromatin configuration across the genome. Is also associated with histone deacetylase (HDAC) activity. Required for the bridging of SNF2, the FACT complex, the PAF complex as well as the U2 snRNP complex to H3K4me3. Functions to modulate the efficiency of pre-mRNA splicing in part through physical bridging of spliceosomal components to H3K4me3. Required for maintaining open chromatin and pluripotency in embryonic stem cells. The polypeptide is Chromodomain-helicase-DNA-binding protein 1 (Homo sapiens (Human)).